The chain runs to 189 residues: Molybdenum cofactor guanylyltransferase (189 aa).

GTP contacts are provided by residues 12–14, K24, D68, and D94; that span reads LAG. D94 serves as a coordination point for Mg(2+).

The protein belongs to the MobA family. As to quaternary structure, monomer. Mg(2+) is required as a cofactor.

The protein localises to the cytoplasm. It carries out the reaction Mo-molybdopterin + GTP + H(+) = Mo-molybdopterin guanine dinucleotide + diphosphate. Functionally, transfers a GMP moiety from GTP to Mo-molybdopterin (Mo-MPT) cofactor (Moco or molybdenum cofactor) to form Mo-molybdopterin guanine dinucleotide (Mo-MGD) cofactor. The protein is Molybdenum cofactor guanylyltransferase of Xanthomonas euvesicatoria pv. vesicatoria (strain 85-10) (Xanthomonas campestris pv. vesicatoria).